We begin with the raw amino-acid sequence, 330 residues long: MEEVEAANKAAVESCHGVLNLLSQQTNDSKSIMVETREAVCKFKRVSSLLSRGLGQRKIKKLNNNNYKFSSSLLPQHMFLESPVCSNNAISGCIPILAPKPLQIVPAGPPPLMLFNQNMCLDKSFLELKPPSSRAVDPKPYQFIHTHQQGVYSRSKSGLNLKFDGSIGASCYSPSISNGSRSFVSSLSMDGSVTDYDRNSFHLIGLPQGSDHISQHSRRTSCSGSLKCGSKSKCHCSKKRKLRVKRSIKVPAISNKIADIPPDEYSWRKYGQKPIKGSPHPRGYYKCSSVRGCPARKHVERCVEETSMLIVTYEGEHNHSRILSSQSAHT.

A DNA-binding region (WRKY) is located at residues 256 to 322 (KIADIPPDEY…YEGEHNHSRI (67 aa)).

The protein localises to the nucleus. Transcription factor. Interacts specifically with the W box (5'-(T)TGAC[CT]-3'), a frequently occurring elicitor-responsive cis-acting element. This chain is Probable WRKY transcription factor 74 (WRKY74), found in Arabidopsis thaliana (Mouse-ear cress).